The chain runs to 143 residues: Small ribosomal subunit protein eS19x (143 aa).

Belongs to the eukaryotic ribosomal protein eS19 family.

In Arabidopsis thaliana (Mouse-ear cress), this protein is Small ribosomal subunit protein eS19x (RPS19C).